We begin with the raw amino-acid sequence, 116 residues long: Large ribosomal subunit protein bL19 (116 aa).

Belongs to the bacterial ribosomal protein bL19 family.

In terms of biological role, this protein is located at the 30S-50S ribosomal subunit interface and may play a role in the structure and function of the aminoacyl-tRNA binding site. The chain is Large ribosomal subunit protein bL19 from Fusobacterium nucleatum subsp. nucleatum (strain ATCC 25586 / DSM 15643 / BCRC 10681 / CIP 101130 / JCM 8532 / KCTC 2640 / LMG 13131 / VPI 4355).